We begin with the raw amino-acid sequence, 308 residues long: Acetylglutamate kinase (308 aa).

Substrate contacts are provided by residues 86-87, arginine 108, and asparagine 201; that span reads GG.

The protein belongs to the acetylglutamate kinase family. ArgB subfamily.

The protein localises to the cytoplasm. It catalyses the reaction N-acetyl-L-glutamate + ATP = N-acetyl-L-glutamyl 5-phosphate + ADP. It participates in amino-acid biosynthesis; L-arginine biosynthesis; N(2)-acetyl-L-ornithine from L-glutamate: step 2/4. Catalyzes the ATP-dependent phosphorylation of N-acetyl-L-glutamate. The sequence is that of Acetylglutamate kinase from Prochlorococcus marinus (strain MIT 9313).